Here is a 441-residue protein sequence, read N- to C-terminus: Alpha-monoglucosyldiacylglycerol synthase (441 aa).

This sequence belongs to the glycosyltransferase group 1 family. Glycosyltransferase 4 subfamily. Requires Mg(2+) as cofactor.

The protein localises to the cell membrane. It catalyses the reaction a 1,2-diacyl-sn-glycerol + UDP-alpha-D-glucose = a 1,2-diacyl-3-O-(alpha-D-glucopyranosyl)-sn-glycerol + UDP + H(+). Its activity is regulated as follows. Activated by the negatively charged lipid phosphatidylglycerol (PG). Glucosyltransferase involved in the biosynthesis of the non-bilayer-prone membrane lipid alpha-monoglucosyldiacylglycerol. This is a major component for maintaining a certain anionic lipid surface charge density, for balancing the bilayer to non-bilayer phase equilibria and for keeping a constant lipid bilayer spontaneous curvature (curvature packing stress). Catalyzes the transfer of a glucosyl residue from UDP-Glc to diacylglycerol (DAG) acceptor to form the corresponding alpha-glucosyl-DAG (1,2-diacyl-3-O-(alpha-D-glucopyranosyl)-sn-glycerol). It can only use UDP-Glc as sugar donor. This is Alpha-monoglucosyldiacylglycerol synthase from Streptococcus pneumoniae (strain ATCC BAA-255 / R6).